The chain runs to 353 residues: UPF0283 membrane protein YcjF (353 aa).

3 consecutive transmembrane segments (helical) span residues 70–90 (MVMG…VQWT), 100–120 (VALG…GSVV), and 213–233 (ESTL…FIAW).

The protein belongs to the UPF0283 family.

The protein resides in the cell inner membrane. In Escherichia coli O7:K1 (strain IAI39 / ExPEC), this protein is UPF0283 membrane protein YcjF.